A 428-amino-acid chain; its full sequence is Enolase (428 aa).

Glutamine 163 lines the (2R)-2-phosphoglycerate pocket. Glutamate 205 functions as the Proton donor in the catalytic mechanism. 3 residues coordinate Mg(2+): aspartate 242, glutamate 285, and aspartate 312. 4 residues coordinate (2R)-2-phosphoglycerate: lysine 337, arginine 366, serine 367, and lysine 388. Residue lysine 337 is the Proton acceptor of the active site.

This sequence belongs to the enolase family. The cofactor is Mg(2+).

It localises to the cytoplasm. The protein resides in the secreted. It is found in the cell surface. The enzyme catalyses (2R)-2-phosphoglycerate = phosphoenolpyruvate + H2O. It functions in the pathway carbohydrate degradation; glycolysis; pyruvate from D-glyceraldehyde 3-phosphate: step 4/5. Catalyzes the reversible conversion of 2-phosphoglycerate (2-PG) into phosphoenolpyruvate (PEP). It is essential for the degradation of carbohydrates via glycolysis. The protein is Enolase of Neisseria meningitidis serogroup C / serotype 2a (strain ATCC 700532 / DSM 15464 / FAM18).